The following is a 366-amino-acid chain: UDP-N-acetylglucosamine--N-acetylmuramyl-(pentapeptide) pyrophosphoryl-undecaprenol N-acetylglucosamine transferase (366 aa).

Residues 14 to 16 (TGG), asparagine 125, arginine 168, serine 196, and glutamine 297 contribute to the UDP-N-acetyl-alpha-D-glucosamine site.

Belongs to the glycosyltransferase 28 family. MurG subfamily.

The protein localises to the cell inner membrane. It catalyses the reaction di-trans,octa-cis-undecaprenyl diphospho-N-acetyl-alpha-D-muramoyl-L-alanyl-D-glutamyl-meso-2,6-diaminopimeloyl-D-alanyl-D-alanine + UDP-N-acetyl-alpha-D-glucosamine = di-trans,octa-cis-undecaprenyl diphospho-[N-acetyl-alpha-D-glucosaminyl-(1-&gt;4)]-N-acetyl-alpha-D-muramoyl-L-alanyl-D-glutamyl-meso-2,6-diaminopimeloyl-D-alanyl-D-alanine + UDP + H(+). The protein operates within cell wall biogenesis; peptidoglycan biosynthesis. Cell wall formation. Catalyzes the transfer of a GlcNAc subunit on undecaprenyl-pyrophosphoryl-MurNAc-pentapeptide (lipid intermediate I) to form undecaprenyl-pyrophosphoryl-MurNAc-(pentapeptide)GlcNAc (lipid intermediate II). The sequence is that of UDP-N-acetylglucosamine--N-acetylmuramyl-(pentapeptide) pyrophosphoryl-undecaprenol N-acetylglucosamine transferase from Rhodopseudomonas palustris (strain HaA2).